A 1025-amino-acid chain; its full sequence is Putative calcium-transporting ATPase 11, plasma membrane-type (1025 aa).

Residues 1–157 lie on the Cytoplasmic side of the membrane; sequence MSNLLKDFEV…NRYTEKPARS (157 aa). Residues 19 to 30 are interaction with calmodulin; it reads ARQRWRSSVGLV. Residues 158 to 178 traverse the membrane as a helical segment; that stretch reads FLTFVWEALQDITLIILMVCA. The Lumenal segment spans residues 179 to 196; sequence VVSIGVGVATEGFPKGMY. Residues 197-217 form a helical membrane-spanning segment; it reads DGTGILLSIILVVMVTAISDY. The Cytoplasmic segment spans residues 218 to 345; the sequence is KQSLQFRDLD…EDETPLQVKL (128 aa). A helical transmembrane segment spans residues 346 to 365; it reads NGVATIIGKIGLGFAVLTFV. At 366–395 the chain is on the lumenal side; the sequence is VLCIRFVVEKATAGSITEWSSEDALTLLDY. A helical transmembrane segment spans residues 396–413; the sequence is FAIAVTIIVVAVPEGLPL. Residues 414 to 801 lie on the Cytoplasmic side of the membrane; the sequence is AVTLSLAFAM…KWGRAVYINI (388 aa). The active-site 4-aspartylphosphate intermediate is Asp451. Asp746 and Asp750 together coordinate Mg(2+). Residues 802-820 traverse the membrane as a helical segment; it reads QKFVQFQLTVNVVALIINF. At 821 to 831 the chain is on the lumenal side; sequence VSACITGSAPL. The chain crosses the membrane as a helical span at residues 832-852; sequence TAVQLLWVNMIMDTLGALALA. Residues 853-872 are Cytoplasmic-facing; that stretch reads TEPPNEGLMKRQPIGRTASF. The chain crosses the membrane as a helical span at residues 873-895; it reads ITRAMWRNIIGQSIYQLIVLGIL. Over 896 to 907 the chain is Lumenal; it reads NFAGKQILNLNG. A helical transmembrane segment spans residues 908–929; it reads PDSTIVLNTIIFNSFVFCQVFN. The Cytoplasmic portion of the chain corresponds to 930–947; that stretch reads EVNSREIEKINVFEGMFK. A helical transmembrane segment spans residues 948-969; the sequence is SWVFVAVMTATVGFQVIIVEFL. Residues 970–979 lie on the Lumenal side of the membrane; sequence GAFASTVPLS. A helical transmembrane segment spans residues 980–1001; it reads WQHWLLCILIGSVSMILAVGLK. Residues 1002–1025 lie on the Cytoplasmic side of the membrane; that stretch reads CIPVESNRHHDGYELLPSGPSDSA.

This sequence belongs to the cation transport ATPase (P-type) (TC 3.A.3) family. Type IIB subfamily.

It localises to the membrane. The enzyme catalyses Ca(2+)(in) + ATP + H2O = Ca(2+)(out) + ADP + phosphate + H(+). Its activity is regulated as follows. Activated by calmodulin. Functionally, this magnesium-dependent enzyme catalyzes the hydrolysis of ATP coupled with the translocation of calcium from the cytosol out of the cell or into organelles. The protein is Putative calcium-transporting ATPase 11, plasma membrane-type (ACA11) of Arabidopsis thaliana (Mouse-ear cress).